We begin with the raw amino-acid sequence, 327 residues long: MTTQQIVLQGPGPWGFRLVGGKDFEQPLAISRVTPGSKAAIANLCIGDLITAIDGEDTSSMTHLEAQNKIKGCADNMTLTVSRSEQKIWSPLVTEEGKRHPYKMNLASEPQEVLHIGSAHNRSAMPFTASPAPSTRVITNQYNSPTGLYSSENISNFNNAVESKTSASGEEANSRPVVQPHPSGSLIIDKDSEVYKMLQEKQELNEPPKQSTSFLVLQEILESDGKGDPNKPSGFRSVKAPVTKVAASVGNAQKLPICDKCGTGIVGVFVKLRDHHRHPECYVCTDCGINLKQKGHFFVEDQIYCEKHARERVTPPEGYDVVTVFRE.

Position 2 is an N-acetylthreonine (Thr2). Residues 3 to 85 enclose the PDZ domain; that stretch reads TQQIVLQGPG…NMTLTVSRSE (83 aa). Phosphoserine occurs at positions 90 and 130. At Tyr142 the chain carries Phosphotyrosine. Residues 161 to 184 form a disordered region; the sequence is VESKTSASGEEANSRPVVQPHPSG. Positions 256-315 constitute an LIM zinc-binding domain; sequence PICDKCGTGIVGVFVKLRDHHRHPECYVCTDCGINLKQKGHFFVEDQIYCEKHARERVTP. Zn(2+) contacts are provided by Cys258, Cys261, His278, Cys281, Cys284, Cys287, Cys305, and His308. Position 314 is a phosphothreonine (Thr314). Phosphotyrosine is present on Tyr319.

Interacts with ACTN1, ACTN2 and ACTN4. Interacts with PDLIM4. In terms of tissue distribution, expressed in heart, lung, spleen, testis and skeletal muscle.

The protein localises to the cytoplasm. It localises to the cytoskeleton. The protein resides in the myofibril. It is found in the sarcomere. Its subcellular location is the z line. Its function is as follows. Cytoskeletal protein that may act as an adapter that brings other proteins (like kinases) to the cytoskeleton. Involved in assembly, disassembly and directioning of stress fibers in fibroblasts. Required for the localization of ACTN1 and PALLD to stress fibers. Required for cell migration and in maintaining cell polarity of fibroblasts. This chain is PDZ and LIM domain protein 1 (Pdlim1), found in Mus musculus (Mouse).